The sequence spans 316 residues: Protease HtpX homolog (316 aa).

The chain crosses the membrane as a helical span at residues 16–36 (LFMALGFTIGGTGGAMIALVV). A Zn(2+)-binding site is contributed by H130. Residue E131 is part of the active site. Residue H134 coordinates Zn(2+). 2 helical membrane passes run 145 to 165 (MTATIAGAISMLANFGMFFGA) and 174 to 194 (LATILAVFVAPFAAMIVQMAI). E199 lines the Zn(2+) pocket. The interval 285–316 (PNFAALSERRGSVSSVPRTRRRSSALDPNGRG) is disordered.

This sequence belongs to the peptidase M48B family. The cofactor is Zn(2+).

It is found in the cell inner membrane. The chain is Protease HtpX homolog from Rhizorhabdus wittichii (strain DSM 6014 / CCUG 31198 / JCM 15750 / NBRC 105917 / EY 4224 / RW1) (Sphingomonas wittichii).